Consider the following 296-residue polypeptide: Polyamine aminopropyltransferase (296 aa).

Residues 16 to 251 (HLWYFEYYTG…GMWSYTFASK (236 aa)) form the PABS domain. Gln46 provides a ligand contact to S-methyl-5'-thioadenosine. His77 and Asp101 together coordinate spermidine. S-methyl-5'-thioadenosine contacts are provided by residues Glu121 and 152–153 (NG). Asp170 serves as the catalytic Proton acceptor. 170–173 (DSTD) is a spermidine binding site.

The protein belongs to the spermidine/spermine synthase family. In terms of assembly, homodimer or homotetramer.

Its subcellular location is the cytoplasm. The enzyme catalyses S-adenosyl 3-(methylsulfanyl)propylamine + putrescine = S-methyl-5'-thioadenosine + spermidine + H(+). The protein operates within amine and polyamine biosynthesis; spermidine biosynthesis; spermidine from putrescine: step 1/1. Its function is as follows. Catalyzes the irreversible transfer of a propylamine group from the amino donor S-adenosylmethioninamine (decarboxy-AdoMet) to putrescine (1,4-diaminobutane) to yield spermidine. In Thermotoga petrophila (strain ATCC BAA-488 / DSM 13995 / JCM 10881 / RKU-1), this protein is Polyamine aminopropyltransferase.